Here is a 20-residue protein sequence, read N- to C-terminus: ADDKNPLEECFCEDDDYCEG.

The protein belongs to the flavin monoamine oxidase family. FIG1 subfamily. Monomer. This is in contrast with most of its orthologs, that are non-covalently linked homodimers. Requires FAD as cofactor. Post-translationally, N-glycosylated. In terms of tissue distribution, expressed by the venom gland.

Its subcellular location is the secreted. The enzyme catalyses an L-alpha-amino acid + O2 + H2O = a 2-oxocarboxylate + H2O2 + NH4(+). The catalysed reaction is L-leucine + O2 + H2O = 4-methyl-2-oxopentanoate + H2O2 + NH4(+). It catalyses the reaction L-phenylalanine + O2 + H2O = 3-phenylpyruvate + H2O2 + NH4(+). It carries out the reaction L-tryptophan + O2 + H2O = indole-3-pyruvate + H2O2 + NH4(+). The enzyme catalyses L-methionine + O2 + H2O = 4-methylsulfanyl-2-oxobutanoate + H2O2 + NH4(+). The catalysed reaction is L-isoleucine + O2 + H2O = (S)-3-methyl-2-oxopentanoate + H2O2 + NH4(+). It catalyses the reaction L-tyrosine + O2 + H2O = 3-(4-hydroxyphenyl)pyruvate + H2O2 + NH4(+). Functionally, catalyzes an oxidative deamination of predominantly hydrophobic and aromatic L-amino acids, thus producing hydrogen peroxide that may contribute to the diverse toxic effects of this enzyme. Is active on L-Ile, L-Leu, L-Met, L-Phe, L-Trp, and L-Tyr. Exhibits diverse biological activities, such as hemorrhage, hemolysis, edema, apoptosis of vascular endothelial cells or tumor cell lines, antibacterial and antiparasitic activities, as well as regulation of platelet aggregation. Its effect on platelets is controversial, since it either induces aggregation or inhibits agonist-induced aggregation. These different effects are probably due to different experimental conditions. This Daboia russelii (Russel's viper) protein is L-amino-acid oxidase L2.